The primary structure comprises 263 residues: Protein M1425_2021 (263 aa).

This sequence belongs to the CinA family.

This chain is Protein M1425_2021, found in Saccharolobus islandicus (strain M.14.25 / Kamchatka #1) (Sulfolobus islandicus).